The following is a 146-amino-acid chain: Large ribosomal subunit protein uL15 (146 aa).

Basic and acidic residues predominate over residues 1–10 (MKLHELKPAE). The segment at 1–51 (MKLHELKPAEGSRQVRNRVGRGTSSGNGKTAGRGQKGQKARSGGGVRLGFE) is disordered. Gly residues-rich tracts occupy residues 23–35 (TSSGNGKTAGRGQ) and 42–51 (SGGGVRLGFE).

The protein belongs to the universal ribosomal protein uL15 family. As to quaternary structure, part of the 50S ribosomal subunit.

In terms of biological role, binds to the 23S rRNA. The chain is Large ribosomal subunit protein uL15 from Enterococcus faecalis (strain ATCC 700802 / V583).